A 38-amino-acid chain; its full sequence is 4 kDa defensin (38 aa).

3 disulfide bridges follow: Cys-4/Cys-25, Cys-11/Cys-33, and Cys-15/Cys-35.

The protein belongs to the invertebrate defensin family. Type 2 subfamily.

It is found in the secreted. Dual-function peptide with antimicrobial and potassium channel-blocking activities. Shows inhibitory activity against Gram-positive bacteria such as M.luteus, S.aureus, B.subtilis, and M.luteus as well as methicillin-resistant S.aureus (MIC=0.1-20 uM). Does not act on bacteria by disrupting membranes. Also moderately inhibits Kv1.1/KCNA1, Kv1.2/KCNA2, and Kv1.3/KCNA3 potassium channels. Inhibits potassium channels by interacting with the pore region. Does not show hemolytic activity. In Leiurus hebraeus (Hebrew deathstalker scorpion), this protein is 4 kDa defensin.